A 210-amino-acid polypeptide reads, in one-letter code: Redox-sensing transcriptional repressor Rex (210 aa).

Positions Lys17–Phe56 form a DNA-binding region, H-T-H motif. Position 91 to 96 (Gly91 to Gly96) interacts with NAD(+).

Belongs to the transcriptional regulatory Rex family. Homodimer.

Its subcellular location is the cytoplasm. In terms of biological role, modulates transcription in response to changes in cellular NADH/NAD(+) redox state. In Clostridium botulinum (strain Alaska E43 / Type E3), this protein is Redox-sensing transcriptional repressor Rex.